Here is a 379-residue protein sequence, read N- to C-terminus: Homoserine O-succinyltransferase (379 aa).

The region spanning 48–357 (NAVLICHALS…SAHGHDAFLM (310 aa)) is the AB hydrolase-1 domain. Ser-154 (nucleophile) is an active-site residue. Arg-224 is a binding site for substrate. Residues Asp-319 and His-352 contribute to the active site. Asp-353 is a substrate binding site.

Belongs to the AB hydrolase superfamily. MetX family. In terms of assembly, homodimer.

Its subcellular location is the cytoplasm. The enzyme catalyses L-homoserine + succinyl-CoA = O-succinyl-L-homoserine + CoA. Its pathway is amino-acid biosynthesis; L-methionine biosynthesis via de novo pathway; O-succinyl-L-homoserine from L-homoserine: step 1/1. With respect to regulation, activity increases in the presence of MetW. Functionally, transfers a succinyl group from succinyl-CoA to L-homoserine, forming succinyl-L-homoserine. The chain is Homoserine O-succinyltransferase from Neisseria gonorrhoeae.